The following is a 168-amino-acid chain: Photosystem I assembly protein Ycf3 (168 aa).

3 TPR repeats span residues 35-68 (AFTY…EIDP), 72-105 (SYIL…NPFL), and 120-153 (GEQA…TPGN).

This sequence belongs to the Ycf3 family.

The protein resides in the plastid. It is found in the chloroplast thylakoid membrane. In terms of biological role, essential for the assembly of the photosystem I (PSI) complex. May act as a chaperone-like factor to guide the assembly of the PSI subunits. This Amborella trichopoda protein is Photosystem I assembly protein Ycf3.